A 381-amino-acid chain; its full sequence is uncharacterized protein (381 aa).

Residues 3–23 (GAVAGLVFLAVLVIFAIIVVA) traverse the membrane as a helical segment.

Belongs to the band 7/mec-2 family.

The protein resides in the membrane. This is an uncharacterized protein from Mycobacterium bovis (strain ATCC BAA-935 / AF2122/97).